Here is a 355-residue protein sequence, read N- to C-terminus: 3-dehydroquinate synthase (355 aa).

Residues 106-110 (GVVGD), 130-131 (TS), lysine 143, and lysine 152 contribute to the NAD(+) site. 3 residues coordinate Zn(2+): glutamate 185, histidine 246, and histidine 262.

The protein belongs to the sugar phosphate cyclases superfamily. Dehydroquinate synthase family. Requires Co(2+) as cofactor. The cofactor is Zn(2+). It depends on NAD(+) as a cofactor.

Its subcellular location is the cytoplasm. The catalysed reaction is 7-phospho-2-dehydro-3-deoxy-D-arabino-heptonate = 3-dehydroquinate + phosphate. Its pathway is metabolic intermediate biosynthesis; chorismate biosynthesis; chorismate from D-erythrose 4-phosphate and phosphoenolpyruvate: step 2/7. Catalyzes the conversion of 3-deoxy-D-arabino-heptulosonate 7-phosphate (DAHP) to dehydroquinate (DHQ). This is 3-dehydroquinate synthase from Latilactobacillus sakei subsp. sakei (strain 23K) (Lactobacillus sakei subsp. sakei).